The following is a 464-amino-acid chain: Siroheme synthase (464 aa).

A precorrin-2 dehydrogenase /sirohydrochlorin ferrochelatase region spans residues 1–203 (MEFLPLFHNL…GQGAEAERML (203 aa)). NAD(+) contacts are provided by residues 22 to 23 (EI) and 43 to 44 (PE). S128 carries the phosphoserine modification. The interval 216 to 464 (GEVYLVGAGP…AWFEGAQATL (249 aa)) is uroporphyrinogen-III C-methyltransferase. An S-adenosyl-L-methionine-binding site is contributed by P225. D248 serves as the catalytic Proton acceptor. K270 acts as the Proton donor in catalysis. S-adenosyl-L-methionine is bound by residues 301–303 (GGD), I306, 331–332 (TA), M383, and G412.

The protein in the N-terminal section; belongs to the precorrin-2 dehydrogenase / sirohydrochlorin ferrochelatase family. This sequence in the C-terminal section; belongs to the precorrin methyltransferase family.

It catalyses the reaction uroporphyrinogen III + 2 S-adenosyl-L-methionine = precorrin-2 + 2 S-adenosyl-L-homocysteine + H(+). The enzyme catalyses precorrin-2 + NAD(+) = sirohydrochlorin + NADH + 2 H(+). It carries out the reaction siroheme + 2 H(+) = sirohydrochlorin + Fe(2+). It functions in the pathway cofactor biosynthesis; adenosylcobalamin biosynthesis; precorrin-2 from uroporphyrinogen III: step 1/1. The protein operates within cofactor biosynthesis; adenosylcobalamin biosynthesis; sirohydrochlorin from precorrin-2: step 1/1. It participates in porphyrin-containing compound metabolism; siroheme biosynthesis; precorrin-2 from uroporphyrinogen III: step 1/1. Its pathway is porphyrin-containing compound metabolism; siroheme biosynthesis; siroheme from sirohydrochlorin: step 1/1. It functions in the pathway porphyrin-containing compound metabolism; siroheme biosynthesis; sirohydrochlorin from precorrin-2: step 1/1. Functionally, multifunctional enzyme that catalyzes the SAM-dependent methylations of uroporphyrinogen III at position C-2 and C-7 to form precorrin-2 via precorrin-1. Then it catalyzes the NAD-dependent ring dehydrogenation of precorrin-2 to yield sirohydrochlorin. Finally, it catalyzes the ferrochelation of sirohydrochlorin to yield siroheme. The chain is Siroheme synthase from Pseudomonas syringae pv. syringae (strain B728a).